A 141-amino-acid chain; its full sequence is Nucleoside diphosphate kinase (141 aa).

Residues lysine 11, phenylalanine 59, arginine 87, threonine 93, arginine 104, and asparagine 114 each contribute to the ATP site. The active-site Pros-phosphohistidine intermediate is the histidine 117.

The protein belongs to the NDK family. As to quaternary structure, homotetramer. Mg(2+) is required as a cofactor.

The protein resides in the cytoplasm. It catalyses the reaction a 2'-deoxyribonucleoside 5'-diphosphate + ATP = a 2'-deoxyribonucleoside 5'-triphosphate + ADP. It carries out the reaction a ribonucleoside 5'-diphosphate + ATP = a ribonucleoside 5'-triphosphate + ADP. Functionally, major role in the synthesis of nucleoside triphosphates other than ATP. The ATP gamma phosphate is transferred to the NDP beta phosphate via a ping-pong mechanism, using a phosphorylated active-site intermediate. The protein is Nucleoside diphosphate kinase of Ralstonia pickettii (strain 12J).